Here is a 355-residue protein sequence, read N- to C-terminus: MTLIVEAKQRLGAFSLDAAFTSEGGVTAFFGRSGSGKTSLIRIIAGLARPDGGRVVLDGERLTETTAGIFVPKHRRRFGYVFQEARLFPHLSVRANLSYGRWFAPKAGRSESFDHIIDLLGIETLLERSPAKLSGGEKQRVAIGRALLSSPRLLLMDEPLAALDEARKAEILPYLERLRDETEIPIVYVSHSIAEVARLANQVVVLSDGKVQATGPAVDILSRPSAAADRKEAGALLEGTVESFDARHRLSTVTLKSSQLHIPSAVLTPGRPVRIRIPSRDVMLATARPEGLSALNILEGRIEAISPGEDGTVEIRIDCAGDAILSRITALSCERLDLRPGKTVFAIIKTVALEG.

In terms of domain architecture, ABC transporter spans 1–233 (MTLIVEAKQR…PSAAADRKEA (233 aa)). 31 to 38 (GRSGSGKT) contacts ATP. The Mop domain maps to 291 to 355 (GLSALNILEG…AIIKTVALEG (65 aa)).

This sequence belongs to the ABC transporter superfamily. Molybdate importer (TC 3.A.1.8) family. In terms of assembly, the complex is composed of two ATP-binding proteins (ModC), two transmembrane proteins (ModB) and a solute-binding protein (ModA).

It is found in the cell inner membrane. It carries out the reaction molybdate(out) + ATP + H2O = molybdate(in) + ADP + phosphate + H(+). Functionally, part of the ABC transporter complex ModABC involved in molybdenum import. Responsible for energy coupling to the transport system. The protein is Molybdenum import ATP-binding protein ModC of Rhizobium etli (strain ATCC 51251 / DSM 11541 / JCM 21823 / NBRC 15573 / CFN 42).